A 145-amino-acid chain; its full sequence is Protein BUD31 homolog 1 (145 aa).

The protein belongs to the BUD31 (G10) family.

The protein resides in the nucleus. The polypeptide is Protein BUD31 homolog 1 (Oryza sativa subsp. japonica (Rice)).